The primary structure comprises 309 residues: Ribonuclease Z (309 aa).

Positions 63, 65, 67, 68, 145, 216, and 274 each coordinate Zn(2+). Asp-67 serves as the catalytic Proton acceptor.

Belongs to the RNase Z family. As to quaternary structure, homodimer. The cofactor is Zn(2+).

It catalyses the reaction Endonucleolytic cleavage of RNA, removing extra 3' nucleotides from tRNA precursor, generating 3' termini of tRNAs. A 3'-hydroxy group is left at the tRNA terminus and a 5'-phosphoryl group is left at the trailer molecule.. Functionally, zinc phosphodiesterase, which displays some tRNA 3'-processing endonuclease activity. Probably involved in tRNA maturation, by removing a 3'-trailer from precursor tRNA. The chain is Ribonuclease Z from Streptococcus gordonii (strain Challis / ATCC 35105 / BCRC 15272 / CH1 / DL1 / V288).